Here is a 1085-residue protein sequence, read N- to C-terminus: MSTPSRFKKDKEIIAEYESQVKEIRAQLVEQQKCLEQQTEMRVQLLQDLQDFFRKKAEIETEYSRNLEKLAERFMAKTRSTKDHQQYKKDQNLLSPVNCWYLLLNQVRRESKDHATLSDIYLNNVIMRFMQISEDSTRMFKKSKEIAFQLHEDLMKVLNELYTVMKTYHMYHAESISAESKLKEAEKQEEKQIGRSGDPVFHIRLEERHQRRSSVKKIEKMKEKRQAKYSENKLKSIKARNEYLLTLEATNASVFKYYIHDLSDLIDCCDLGYHASLNRALRTYLSAEYNLETSRHEGLDIIENAVDNLEPRSDKQRFMEMYPAAFCPPMKFEFQSHMGDEVCQVSAQQPVQAELMLRYQQLQSRLATLKIENEEVKKTTEATLQTIQDMVTIEDYDVSECFQHSRSTESVKSTVSETYLSKPSIAKRRANQQETEQFYFMKLREYLEGSNLITKLQAKHDLLQRTLGEGHRAEYMTTRPPNVPPKPQKHRKSRPRSQYNTKLFNGDLETFVKDSGQVIPLIVESCIRFINLYGLQHQGIFRVSGSQVEVNDIKNSFERGENPLADDQSNHDINSVAGVLKLYFRGLENPLFPKERFNDLISCIRIDNLYERALHIRKLLLTLPRSVLIVMRYLFAFLNHLSQYSDENMMDPYNLAICFGPTLMPVPEIQDQVSCQAHVNEIIKTIIIHHETIFPDAKELDGPVYEKCMAGDDYCDSPYSEHGTLEEVDQDAGTEPHTSEDECEPIEAIAKFDYVGRSARELSFKKGASLLLYHRASEDWWEGRHNGIDGLVPHQYIVVQDMDDTFSDTLSQKADSEASSGPVTEDKSSSKDMNSPTDRHPDGYLARQRKRGEPPPPVRRPGRTSDGHCPLHPPHALSNSSVDLGSPSLASHPRGLLQNRGLNNDSPERRRRPGHGSLTNISRHDSLKKIDSPPIRRSTSSGQYTGFNDHKPLDPETIAQDIEETMNTALNELRELERQSTAKHAPDVVLDTLEQVKNSPTPATSTESLSPLHNVALRSSEPQIRRSTSSSSDTMSTFKPMVAPRMGVQLKPPALRPKPAVLPKTNPTIGPAPPPQGPTDKSCTM.

The 296-residue stretch at 19–314 (SQVKEIRAQL…AVDNLEPRSD (296 aa)) folds into the F-BAR domain. The stretch at 351 to 390 (VQAELMLRYQQLQSRLATLKIENEEVKKTTEATLQTIQDM) forms a coiled coil. S416 bears the Phosphoserine mark. The tract at residues 475–496 (YMTTRPPNVPPKPQKHRKSRPR) is disordered. Positions 506–694 (GDLETFVKDS…TIIIHHETIF (189 aa)) constitute a Rho-GAP domain. The region spanning 743-802 (CEPIEAIAKFDYVGRSARELSFKKGASLLLYHRASEDWWEGRHNGIDGLVPHQYIVVQDM) is the SH3 domain. Residues 808 to 822 (DTLSQKADSEASSGP) show a composition bias toward polar residues. Residues 808 to 954 (DTLSQKADSE…TGFNDHKPLD (147 aa)) are disordered. 2 positions are modified to phosphoserine: S835 and S917. Positions 922–931 (SRHDSLKKID) are enriched in basic and acidic residues. Position 932 is a phosphoserine (S932). Residues 937–946 (RSTSSGQYTG) are compositionally biased toward polar residues. Positions 956–985 (ETIAQDIEETMNTALNELRELERQSTAKHA) form a coiled coil. The span at 997-1011 (KNSPTPATSTESLSP) shows a compositional bias: polar residues. Disordered regions lie at residues 997 to 1038 (KNSP…MSTF) and 1051 to 1085 (KPPALRPKPAVLPKTNPTIGPAPPPQGPTDKSCTM). At S999 the chain carries Phosphoserine. T1001 bears the Phosphothreonine mark. The span at 1027-1037 (STSSSSDTMST) shows a compositional bias: low complexity. Phosphoserine is present on S1032.

In terms of assembly, homodimer. Forms a heterooligomer with SRGAP2 and SRGAP3 through its F-BAR domain. Interacts with ROBO1, CDC42 and RHOA. Interacts with FASLG. As to expression, expressed in brain, lung, kidney, and testis.

In terms of biological role, GTPase-activating protein for RhoA and Cdc42 small GTPases. Together with CDC42 seems to be involved in the pathway mediating the repulsive signaling of Robo and Slit proteins in neuronal migration. SLIT2, probably through interaction with ROBO1, increases the interaction of SRGAP1 with ROBO1 and inactivates CDC42. This Homo sapiens (Human) protein is SLIT-ROBO Rho GTPase-activating protein 1 (SRGAP1).